The following is a 315-amino-acid chain: DNA-directed RNA polymerase subunit alpha (315 aa).

Positions 1–228 (MLEIEKPIIE…EHFKLFMSLT (228 aa)) are alpha N-terminal domain (alpha-NTD). The tract at residues 245 to 315 (KEKVLEMTVE…LGLCLKLNDE (71 aa)) is alpha C-terminal domain (alpha-CTD).

It belongs to the RNA polymerase alpha chain family. As to quaternary structure, homodimer. The RNAP catalytic core consists of 2 alpha, 1 beta, 1 beta' and 1 omega subunit. When a sigma factor is associated with the core the holoenzyme is formed, which can initiate transcription.

The enzyme catalyses RNA(n) + a ribonucleoside 5'-triphosphate = RNA(n+1) + diphosphate. In terms of biological role, DNA-dependent RNA polymerase catalyzes the transcription of DNA into RNA using the four ribonucleoside triphosphates as substrates. The polypeptide is DNA-directed RNA polymerase subunit alpha (Clostridium botulinum (strain Alaska E43 / Type E3)).